Consider the following 186-residue polypeptide: ATP synthase subunit delta (186 aa).

The protein belongs to the ATPase delta chain family. In terms of assembly, F-type ATPases have 2 components, F(1) - the catalytic core - and F(0) - the membrane proton channel. F(1) has five subunits: alpha(3), beta(3), gamma(1), delta(1), epsilon(1). F(0) has three main subunits: a(1), b(2) and c(10-14). The alpha and beta chains form an alternating ring which encloses part of the gamma chain. F(1) is attached to F(0) by a central stalk formed by the gamma and epsilon chains, while a peripheral stalk is formed by the delta and b chains.

It localises to the cell inner membrane. F(1)F(0) ATP synthase produces ATP from ADP in the presence of a proton or sodium gradient. F-type ATPases consist of two structural domains, F(1) containing the extramembraneous catalytic core and F(0) containing the membrane proton channel, linked together by a central stalk and a peripheral stalk. During catalysis, ATP synthesis in the catalytic domain of F(1) is coupled via a rotary mechanism of the central stalk subunits to proton translocation. Its function is as follows. This protein is part of the stalk that links CF(0) to CF(1). It either transmits conformational changes from CF(0) to CF(1) or is implicated in proton conduction. In Bacteroides fragilis (strain ATCC 25285 / DSM 2151 / CCUG 4856 / JCM 11019 / LMG 10263 / NCTC 9343 / Onslow / VPI 2553 / EN-2), this protein is ATP synthase subunit delta.